We begin with the raw amino-acid sequence, 363 residues long: tRNA(Met) cytidine acetate ligase (363 aa).

Residues 7–20 (IAEF…HKYL), G96, N152, and R175 contribute to the ATP site.

The protein belongs to the TmcAL family.

The protein resides in the cytoplasm. The catalysed reaction is cytidine(34) in elongator tRNA(Met) + acetate + ATP = N(4)-acetylcytidine(34) in elongator tRNA(Met) + AMP + diphosphate. In terms of biological role, catalyzes the formation of N(4)-acetylcytidine (ac(4)C) at the wobble position of elongator tRNA(Met), using acetate and ATP as substrates. First activates an acetate ion to form acetyladenylate (Ac-AMP) and then transfers the acetyl group to tRNA to form ac(4)C34. The sequence is that of tRNA(Met) cytidine acetate ligase from Streptococcus thermophilus (strain CNRZ 1066).